We begin with the raw amino-acid sequence, 292 residues long: Ribonuclease HIII (292 aa).

The 217-residue stretch at 76–292 (TNLIGTDEVG…TQKAMKIAQL (217 aa)) folds into the RNase H type-2 domain. Aspartate 82, glutamate 83, and aspartate 186 together coordinate a divalent metal cation.

This sequence belongs to the RNase HII family. RnhC subfamily. Mn(2+) is required as a cofactor. Mg(2+) serves as cofactor.

It localises to the cytoplasm. It catalyses the reaction Endonucleolytic cleavage to 5'-phosphomonoester.. Functionally, endonuclease that specifically degrades the RNA of RNA-DNA hybrids. The polypeptide is Ribonuclease HIII (Lactococcus lactis subsp. cremoris (strain SK11)).